The sequence spans 195 residues: Group XIIB secretory phospholipase A2-like protein (195 aa).

The first 19 residues, 1 to 19 (MKLLCGFFLLWLGLVGNLA), serve as a signal peptide directing secretion. Positions 89, 91, 93, and 116 each coordinate Ca(2+).

It belongs to the phospholipase A2 family. It depends on Ca(2+) as a cofactor.

The protein resides in the secreted. In terms of biological role, not known; does not seem to have catalytic activity. This chain is Group XIIB secretory phospholipase A2-like protein (Pla2g12b), found in Mus musculus (Mouse).